The primary structure comprises 309 residues: MNFEKIIAQNKLKTNAVLTTYCVIFAFIGLLVDVIRINANDLGIALFKLITFQIFPTITVIMFLVAFVVIVVCIQNFSSIMLSGDEYKLIDPSKVLSSKENQIHGLLLELLEEAKLNFEPKLYIINAPYMNAFASGWNETNSLIALTSALIERLDRDELKAVIAHELSHIRHNDIRLTMCVGILSNIMLLVANFSVYFFMGNRKNSGANLAKMILLVLQIVLPFLTLILQMYLSRTREYMADSGAAFLMHDSKPMIRALQKISNDYKENDYKEIDTNSTRSAAYLFNAEMFSTHPSIKNRIQSLSRRAL.

Helical transmembrane passes span 15–35 (NAVLTTYCVIFAFIGLLVDVI) and 54–74 (IFPTITVIMFLVAFVVIVVCI). Histidine 165 is a Zn(2+) binding site. Glutamate 166 is an active-site residue. Histidine 169 contributes to the Zn(2+) binding site. Transmembrane regions (helical) follow at residues 181–201 (VGILSNIMLLVANFSVYFFMG) and 213–233 (MILLVLQIVLPFLTLILQMYL). Glutamate 238 is a Zn(2+) binding site.

This sequence belongs to the peptidase M48B family. Requires Zn(2+) as cofactor.

Its subcellular location is the cell inner membrane. This is Protease HtpX homolog from Helicobacter acinonychis (strain Sheeba).